The chain runs to 801 residues: Leucine--tRNA ligase (801 aa).

Residues 40–51 (PYPSGAGLHVGH) carry the 'HIGH' region motif. A 'KMSKS' region motif is present at residues 576 to 580 (KMSKS). An ATP-binding site is contributed by Lys579.

Belongs to the class-I aminoacyl-tRNA synthetase family.

The protein localises to the cytoplasm. The enzyme catalyses tRNA(Leu) + L-leucine + ATP = L-leucyl-tRNA(Leu) + AMP + diphosphate. In Exiguobacterium sibiricum (strain DSM 17290 / CCUG 55495 / CIP 109462 / JCM 13490 / 255-15), this protein is Leucine--tRNA ligase.